The following is a 553-amino-acid chain: Formate--tetrahydrofolate ligase (553 aa).

Residue 65–72 (TPAGEGKS) coordinates ATP.

It belongs to the formate--tetrahydrofolate ligase family.

It carries out the reaction (6S)-5,6,7,8-tetrahydrofolate + formate + ATP = (6R)-10-formyltetrahydrofolate + ADP + phosphate. It functions in the pathway one-carbon metabolism; tetrahydrofolate interconversion. The protein is Formate--tetrahydrofolate ligase of Brachyspira hyodysenteriae (strain ATCC 49526 / WA1).